The primary structure comprises 552 residues: CTP synthase (552 aa).

An amidoligase domain region spans residues 1–270 (MTKFVFVTGG…DGLICDKLRL (270 aa)). S13 contacts CTP. S13 serves as a coordination point for UTP. ATP-binding positions include 14–19 (SLGKGI) and D71. D71 and E144 together coordinate Mg(2+). CTP contacts are provided by residues 151-153 (DIE), 191-196 (KTKPTQ), and K227. Residues 191–196 (KTKPTQ) and K227 contribute to the UTP site. In terms of domain architecture, Glutamine amidotransferase type-1 spans 295–548 (QIAMVGKYVE…IKAAVEHQKP (254 aa)). G357 serves as a coordination point for L-glutamine. C384 acts as the Nucleophile; for glutamine hydrolysis in catalysis. L-glutamine contacts are provided by residues 385 to 388 (LGMQ) and E408. The tract at residues 432–451 (KTRSENSDLGGTMRLGAQSS) is disordered. R474 is a binding site for L-glutamine. Active-site residues include H521 and E523.

It belongs to the CTP synthase family. As to quaternary structure, homotetramer.

The enzyme catalyses UTP + L-glutamine + ATP + H2O = CTP + L-glutamate + ADP + phosphate + 2 H(+). The catalysed reaction is L-glutamine + H2O = L-glutamate + NH4(+). It catalyses the reaction UTP + NH4(+) + ATP = CTP + ADP + phosphate + 2 H(+). The protein operates within pyrimidine metabolism; CTP biosynthesis via de novo pathway; CTP from UDP: step 2/2. Its activity is regulated as follows. Allosterically activated by GTP, when glutamine is the substrate; GTP has no effect on the reaction when ammonia is the substrate. The allosteric effector GTP functions by stabilizing the protein conformation that binds the tetrahedral intermediate(s) formed during glutamine hydrolysis. Inhibited by the product CTP, via allosteric rather than competitive inhibition. Catalyzes the ATP-dependent amination of UTP to CTP with either L-glutamine or ammonia as the source of nitrogen. Regulates intracellular CTP levels through interactions with the four ribonucleotide triphosphates. This is CTP synthase from Acidovorax sp. (strain JS42).